A 132-amino-acid chain; its full sequence is Small ribosomal subunit protein uS8 (132 aa).

The protein belongs to the universal ribosomal protein uS8 family. In terms of assembly, part of the 30S ribosomal subunit. Contacts proteins S5 and S12.

Functionally, one of the primary rRNA binding proteins, it binds directly to 16S rRNA central domain where it helps coordinate assembly of the platform of the 30S subunit. The protein is Small ribosomal subunit protein uS8 of Streptococcus pyogenes serotype M49 (strain NZ131).